The sequence spans 705 residues: Ribosomal RNA large subunit methyltransferase K/L (705 aa).

A THUMP domain is found at 43–154 (LLYQSLLWSR…RDTASVALDL (112 aa)).

The protein belongs to the methyltransferase superfamily. RlmKL family.

The protein resides in the cytoplasm. It carries out the reaction guanosine(2445) in 23S rRNA + S-adenosyl-L-methionine = N(2)-methylguanosine(2445) in 23S rRNA + S-adenosyl-L-homocysteine + H(+). The enzyme catalyses guanosine(2069) in 23S rRNA + S-adenosyl-L-methionine = N(2)-methylguanosine(2069) in 23S rRNA + S-adenosyl-L-homocysteine + H(+). In terms of biological role, specifically methylates the guanine in position 2445 (m2G2445) and the guanine in position 2069 (m7G2069) of 23S rRNA. This chain is Ribosomal RNA large subunit methyltransferase K/L, found in Pectobacterium atrosepticum (strain SCRI 1043 / ATCC BAA-672) (Erwinia carotovora subsp. atroseptica).